Here is a 423-residue protein sequence, read N- to C-terminus: Imidazolonepropionase (423 aa).

2 residues coordinate Fe(3+): H78 and H80. Zn(2+)-binding residues include H78 and H80. 4-imidazolone-5-propanoate-binding residues include R87, Y150, and H183. Residue Y150 coordinates N-formimidoyl-L-glutamate. H247 is a Fe(3+) binding site. H247 is a binding site for Zn(2+). E250 lines the 4-imidazolone-5-propanoate pocket. Residue D322 coordinates Fe(3+). Zn(2+) is bound at residue D322. The N-formimidoyl-L-glutamate site is built by N324 and G326. 4-imidazolone-5-propanoate is bound at residue S327.

Belongs to the metallo-dependent hydrolases superfamily. HutI family. Zn(2+) is required as a cofactor. It depends on Fe(3+) as a cofactor.

The protein resides in the cytoplasm. The catalysed reaction is 4-imidazolone-5-propanoate + H2O = N-formimidoyl-L-glutamate. It participates in amino-acid degradation; L-histidine degradation into L-glutamate; N-formimidoyl-L-glutamate from L-histidine: step 3/3. Its function is as follows. Catalyzes the hydrolytic cleavage of the carbon-nitrogen bond in imidazolone-5-propanoate to yield N-formimidoyl-L-glutamate. It is the third step in the universal histidine degradation pathway. In Bacillus cereus (strain B4264), this protein is Imidazolonepropionase.